We begin with the raw amino-acid sequence, 230 residues long: Large ribosomal subunit protein uL1 (230 aa).

This sequence belongs to the universal ribosomal protein uL1 family. Part of the 50S ribosomal subunit.

Functionally, binds directly to 23S rRNA. The L1 stalk is quite mobile in the ribosome, and is involved in E site tRNA release. Protein L1 is also a translational repressor protein, it controls the translation of the L11 operon by binding to its mRNA. This is Large ribosomal subunit protein uL1 from Staphylococcus aureus (strain N315).